The following is a 699-amino-acid chain: Elongation factor G (699 aa).

The tr-type G domain maps to Glu-8–Ile-283. GTP-binding positions include Ala-17–Thr-24, Asp-81–His-85, and Asn-135–Asp-138.

This sequence belongs to the TRAFAC class translation factor GTPase superfamily. Classic translation factor GTPase family. EF-G/EF-2 subfamily.

It is found in the cytoplasm. Catalyzes the GTP-dependent ribosomal translocation step during translation elongation. During this step, the ribosome changes from the pre-translocational (PRE) to the post-translocational (POST) state as the newly formed A-site-bound peptidyl-tRNA and P-site-bound deacylated tRNA move to the P and E sites, respectively. Catalyzes the coordinated movement of the two tRNA molecules, the mRNA and conformational changes in the ribosome. This chain is Elongation factor G, found in Rickettsia peacockii (strain Rustic).